The chain runs to 337 residues: Inositol 2-dehydrogenase (337 aa).

The protein belongs to the Gfo/Idh/MocA family. In terms of assembly, homotetramer.

The catalysed reaction is myo-inositol + NAD(+) = scyllo-inosose + NADH + H(+). Functionally, involved in the oxidation of myo-inositol (MI) to 2-keto-myo-inositol (2KMI or 2-inosose). The polypeptide is Inositol 2-dehydrogenase (Burkholderia vietnamiensis (strain G4 / LMG 22486) (Burkholderia cepacia (strain R1808))).